The primary structure comprises 284 residues: RNase adapter protein RapZ (284 aa).

Position 8-15 (8-15 (GRSGSGKS)) interacts with ATP. 56–59 (DVRN) contacts GTP. The tract at residues 266 to 284 (RSRGKNVQLRHRTLEKRKE) is RNA-binding.

The protein belongs to the RapZ-like family. RapZ subfamily. Homotrimer.

Functionally, modulates the synthesis of GlmS, by affecting the processing and stability of the regulatory small RNA GlmZ. When glucosamine-6-phosphate (GlcN6P) concentrations are high in the cell, RapZ binds GlmZ and targets it to cleavage by RNase E. Consequently, GlmZ is inactivated and unable to activate GlmS synthesis. Under low GlcN6P concentrations, RapZ is sequestered and inactivated by an other regulatory small RNA, GlmY, preventing GlmZ degradation and leading to synthesis of GlmS. The sequence is that of RNase adapter protein RapZ from Hamiltonella defensa subsp. Acyrthosiphon pisum (strain 5AT).